Consider the following 218-residue polypeptide: Cytidylate kinase (218 aa).

11–19 is an ATP binding site; that stretch reads GPGASGKGT.

The protein belongs to the cytidylate kinase family. Type 1 subfamily.

It is found in the cytoplasm. The catalysed reaction is CMP + ATP = CDP + ADP. It carries out the reaction dCMP + ATP = dCDP + ADP. In Neisseria gonorrhoeae (strain ATCC 700825 / FA 1090), this protein is Cytidylate kinase.